A 33-amino-acid polypeptide reads, in one-letter code: Tail virion protein G9P (33 aa).

Residues 5-25 (VGLFIGAYIMGFALFYGIGFF) form a helical membrane-spanning segment.

This sequence belongs to the inovirus G9P protein family.

It is found in the virion. Its subcellular location is the host membrane. Its function is as follows. May initiate with G7P the virion concomitant assembly-budding process, by interacting with the packaging signal of the viral genome. The assembly-budding takes place at the host inner membrane. In turn, G7P and G9P are present at the end of the filamentous virion that emerges first from the bacterial host. This Escherichia coli (Bacteriophage I2-2) protein is Tail virion protein G9P (IX).